We begin with the raw amino-acid sequence, 105 residues long: Nucleoid-associated protein ABO_1774 (105 aa).

A disordered region spans residues 85–105 (QQQDSMQNMAGGFPFPPGFKP).

The protein belongs to the YbaB/EbfC family. Homodimer.

It is found in the cytoplasm. Its subcellular location is the nucleoid. Binds to DNA and alters its conformation. May be involved in regulation of gene expression, nucleoid organization and DNA protection. This chain is Nucleoid-associated protein ABO_1774, found in Alcanivorax borkumensis (strain ATCC 700651 / DSM 11573 / NCIMB 13689 / SK2).